Reading from the N-terminus, the 90-residue chain is Mitochondrial import inner membrane translocase subunit TIM8 (90 aa).

The Twin CX3C motif motif lies at 44–70 (CFKKCNANKPITSGTLDSSEEQCLTNC). 2 cysteine pairs are disulfide-bonded: C44-C70 and C48-C66.

It belongs to the small Tim family. As to quaternary structure, heterohexamer; composed of 3 copies of TIM8 and 3 copies of TIM13, named soluble 70 kDa complex. Associates with the TIM22 complex, whose core is composed of TIM22 and TIM54. Interacts with the transmembrane regions of multi-pass transmembrane proteins in transit.

It is found in the mitochondrion inner membrane. Its function is as follows. Mitochondrial intermembrane chaperone that participates in the import and insertion of some multi-pass transmembrane proteins into the mitochondrial inner membrane. Also required for the transfer of beta-barrel precursors from the TOM complex to the sorting and assembly machinery (SAM complex) of the outer membrane. Acts as a chaperone-like protein that protects the hydrophobic precursors from aggregation and guide them through the mitochondrial intermembrane space. The TIM8-TIM13 complex is non essential and only mediates the import of few proteins, while the predominant TIM9-TIM10 70 kDa complex is crucial and mediates the import of much more proteins. This is Mitochondrial import inner membrane translocase subunit TIM8 (TIM8) from Debaryomyces hansenii (strain ATCC 36239 / CBS 767 / BCRC 21394 / JCM 1990 / NBRC 0083 / IGC 2968) (Yeast).